The following is a 179-amino-acid chain: UPF0302 protein BPUM_1989 (179 aa).

This sequence belongs to the UPF0302 family.

The polypeptide is UPF0302 protein BPUM_1989 (Bacillus pumilus (strain SAFR-032)).